We begin with the raw amino-acid sequence, 802 residues long: Elongation factor G, mitochondrial (802 aa).

Residues 1–24 (MRYPSLARLPRRALSGLARAPVRL) constitute a mitochondrion transit peptide. The region spanning 100 to 387 (SRVRNIGIAA…GVIDYLPNPS (288 aa)) is the tr-type G domain. GTP-binding positions include 109–116 (AHIDSGKT), 185–189 (DTPGH), and 239–242 (NKMD).

This sequence belongs to the TRAFAC class translation factor GTPase superfamily. Classic translation factor GTPase family. EF-G/EF-2 subfamily.

The protein localises to the mitochondrion. The protein operates within protein biosynthesis; polypeptide chain elongation. In terms of biological role, mitochondrial GTPase that catalyzes the GTP-dependent ribosomal translocation step during translation elongation. During this step, the ribosome changes from the pre-translocational (PRE) to the post-translocational (POST) state as the newly formed A-site-bound peptidyl-tRNA and P-site-bound deacylated tRNA move to the P and E sites, respectively. Catalyzes the coordinated movement of the two tRNA molecules, the mRNA and conformational changes in the ribosome. This Aspergillus terreus (strain NIH 2624 / FGSC A1156) protein is Elongation factor G, mitochondrial (mef1).